The primary structure comprises 344 residues: Signal peptide peptidase (344 aa).

At 1-11 the chain is on the lumenal side; sequence MKNCERFANLA. The helical transmembrane segment at 12–32 threads the bilayer; it reads LAGLTLAPLVVRVNPNLNVIL. The Cytoplasmic segment spans residues 33-62; it reads TACITVYVGCFRSVKDTPPTETMSKEHAMR. Residues 63 to 83 form a helical membrane-spanning segment; sequence FPLVGSAMLLSLFLLFKFLSK. The Lumenal segment spans residues 84–89; the sequence is DLVNAV. A helical membrane pass occupies residues 90–110; that stretch reads LTAYFFVLGIVALSATLLPAI. The Cytoplasmic portion of the chain corresponds to 111-136; sequence RRFLPNPWNDNLIVWRFPYFKSLEVE. The helical transmembrane segment at 137–157 threads the bilayer; sequence FTKSQVVAGIPGTFFCAWYAW. Residues 158–160 are Lumenal-facing; the sequence is KKH. A helical transmembrane segment spans residues 161–181; sequence WLANNILGLSFCIQGIEMLSL. Residues 182 to 188 are Cytoplasmic-facing; it reads GSFKTGA. The helical transmembrane segment at 189 to 209 threads the bilayer; that stretch reads ILLAGLFFYDIFWVFFTPVMV. Aspartate 198 is an active-site residue. Over 210-230 the chain is Lumenal; it reads SVAKSFDAPIKLLFPTGDALR. A helical membrane pass occupies residues 231–251; the sequence is PYSMLGLGDIVIPGIFVALAL. Residue aspartate 239 is part of the active site. Topologically, residues 252–263 are cytoplasmic; sequence RFDVSRRRQPQY. The helical transmembrane segment at 264–284 threads the bilayer; it reads FTSAFIGYAVGVILTIVVMNW. Topologically, residues 285 to 290 are lumenal; the sequence is FQAAQP. The short motif at 290–292 is the PAL element; the sequence is PAL. A helical membrane pass occupies residues 291–311; that stretch reads ALLYIVPAVIGFLASHCIWNG. Residues 312-344 are Cytoplasmic-facing; that stretch reads DIKPLLAFDESKTEEATTDESKTSEEVNKAHDE. Positions 323–344 are disordered; sequence KTEEATTDESKTSEEVNKAHDE.

It belongs to the peptidase A22B family. In terms of tissue distribution, ubiquitous with the highest expression in emerging leaves, roots, and floral tissues (at the protein level). Highly detected in pollen.

The protein resides in the endoplasmic reticulum membrane. Intramembrane-cleaving aspartic protease (I-CLiP) that cleaves type II membrane signal peptides in the hydrophobic plane of the membrane. Catalyzes intramembrane proteolysis of some signal peptides after they have been cleaved from a preprotein, resulting in the release of the fragment from the ER membrane into the cytoplasm. Plays a critical role in the development and function of the reproductive tissues, especially in pollen development. This is Signal peptide peptidase (SPP) from Arabidopsis thaliana (Mouse-ear cress).